The following is a 630-amino-acid chain: Plastin-3 (630 aa).

EF-hand domains follow at residues 12 to 47 and 52 to 87; these read DELD…ANMP and KVRE…VKSS. Ca(2+) contacts are provided by D25, N27, N29, E36, D65, N67, D69, K71, and E76. Actin-binding stretches follow at residues 109 to 382 and 383 to 627; these read TSEL…ALTK and PENQ…GRGM. Calponin-homology (CH) domains are found at residues 123-239 and 267-378; these read EEEK…KIGL and LSPE…NKYP. Residues S268, S293, S326, and S339 each carry the phosphoserine modification. The residue at position 391 (T391) is a Phosphothreonine. 2 consecutive Calponin-homology (CH) domains span residues 397-506 and 518-627; these read TREE…RRYT and KATD…GRGM.

In terms of assembly, monomer.

It is found in the cytoplasm. Its function is as follows. Actin-bundling protein. The protein is Plastin-3 (Pls3) of Rattus norvegicus (Rat).